A 322-amino-acid polypeptide reads, in one-letter code: Mitochondrial glutamate carrier 1 (322 aa).

3 Solcar repeats span residues 6–93, 101–214, and 223–312; these read ISLP…FRYQ, LTLF…LNEL, and SPFY…GIAE. The next 6 membrane-spanning stretches (helical) occupy residues 12–32, 62–82, 107–127, 189–209, 223–243, and 292–312; these read LINGGIAGLIGVTCVFPIDLA, YFGMYRGAAVNLTLVTPEKAI, MLAGCGAGTCQVIVTTPMEML, GLGATLLRDVPFSIVYFPLFA, SPFYVSFLAGCVAGSAAAVAV, and ALVIAPLFGIAQVVYFLGIAE.

The protein belongs to the mitochondrial carrier (TC 2.A.29) family.

The protein localises to the mitochondrion inner membrane. It catalyses the reaction L-glutamate(in) + H(+)(in) = L-glutamate(out) + H(+)(out). Its function is as follows. Mitochondrial glutamate/H(+) symporter. Responsible for the transport of glutamate from the cytosol into the mitochondrial matrix with the concomitant import of a proton. Plays a role in the control of glucose-stimulated insulin secretion. This chain is Mitochondrial glutamate carrier 1 (SLC25A22), found in Bos taurus (Bovine).